The sequence spans 85 residues: Putative RING finger protein 095L (85 aa).

An RING-type; degenerate zinc finger spans residues 39–73; the sequence is CPIWYNYQVNTVFLPCAHVACYLCSKIIKNCHLCR.

This Invertebrate iridescent virus 6 (IIV-6) protein is Putative RING finger protein 095L.